A 332-amino-acid chain; its full sequence is Ketol-acid reductoisomerase (NADP(+)) (332 aa).

The 182-residue stretch at 1-182 (MAVIYYDKDC…GSNRAGVLET (182 aa)) folds into the KARI N-terminal Rossmann domain. Residues 25 to 28 (YGAQ) and 83 to 86 (DTSQ) contribute to the NADP(+) site. The active site involves H108. G134 contributes to the NADP(+) binding site. Positions 183 to 328 (TFAEETETDL…AELRSMMSWL (146 aa)) constitute a KARI C-terminal knotted domain. Mg(2+) contacts are provided by D191, E195, E227, and E231. S252 is a binding site for substrate.

Belongs to the ketol-acid reductoisomerase family. Mg(2+) serves as cofactor.

It catalyses the reaction (2R)-2,3-dihydroxy-3-methylbutanoate + NADP(+) = (2S)-2-acetolactate + NADPH + H(+). The catalysed reaction is (2R,3R)-2,3-dihydroxy-3-methylpentanoate + NADP(+) = (S)-2-ethyl-2-hydroxy-3-oxobutanoate + NADPH + H(+). Its pathway is amino-acid biosynthesis; L-isoleucine biosynthesis; L-isoleucine from 2-oxobutanoate: step 2/4. It participates in amino-acid biosynthesis; L-valine biosynthesis; L-valine from pyruvate: step 2/4. In terms of biological role, involved in the biosynthesis of branched-chain amino acids (BCAA). Catalyzes an alkyl-migration followed by a ketol-acid reduction of (S)-2-acetolactate (S2AL) to yield (R)-2,3-dihydroxy-isovalerate. In the isomerase reaction, S2AL is rearranged via a Mg-dependent methyl migration to produce 3-hydroxy-3-methyl-2-ketobutyrate (HMKB). In the reductase reaction, this 2-ketoacid undergoes a metal-dependent reduction by NADPH to yield (R)-2,3-dihydroxy-isovalerate. In Dehalococcoides mccartyi (strain ATCC BAA-2266 / KCTC 15142 / 195) (Dehalococcoides ethenogenes (strain 195)), this protein is Ketol-acid reductoisomerase (NADP(+)).